A 127-amino-acid polypeptide reads, in one-letter code: Large ribosomal subunit protein uL18 (127 aa).

The protein belongs to the universal ribosomal protein uL18 family. In terms of assembly, part of the 50S ribosomal subunit; part of the 5S rRNA/L5/L18/L25 subcomplex. Contacts the 5S and 23S rRNAs.

This is one of the proteins that bind and probably mediate the attachment of the 5S RNA into the large ribosomal subunit, where it forms part of the central protuberance. The sequence is that of Large ribosomal subunit protein uL18 from Streptomyces griseus subsp. griseus (strain JCM 4626 / CBS 651.72 / NBRC 13350 / KCC S-0626 / ISP 5235).